We begin with the raw amino-acid sequence, 473 residues long: Adenosylhomocysteinase (473 aa).

Substrate is bound by residues threonine 60, aspartate 135, and glutamate 197. 198–200 is an NAD(+) binding site; it reads TTT. Substrate-binding residues include lysine 227 and aspartate 231. NAD(+) contacts are provided by residues asparagine 232, 261–266, glutamate 284, asparagine 319, 340–342, and asparagine 385; these read GFGDVG and IGH.

It belongs to the adenosylhomocysteinase family. NAD(+) serves as cofactor.

It is found in the cytoplasm. It carries out the reaction S-adenosyl-L-homocysteine + H2O = L-homocysteine + adenosine. It participates in amino-acid biosynthesis; L-homocysteine biosynthesis; L-homocysteine from S-adenosyl-L-homocysteine: step 1/1. May play a key role in the regulation of the intracellular concentration of adenosylhomocysteine. The chain is Adenosylhomocysteinase from Bradyrhizobium diazoefficiens (strain JCM 10833 / BCRC 13528 / IAM 13628 / NBRC 14792 / USDA 110).